The primary structure comprises 260 residues: Snake venom serine protease homolog (260 aa).

An N-terminal signal peptide occupies residues 1 to 18 (MVLIRVLANLLILQLSYA). A propeptide spanning residues 19–24 (QKASEL) is cleaved from the precursor. The 227-residue stretch at 25–251 (IIGGDECNIN…YTEWIRSIIA (227 aa)) folds into the Peptidase S1 domain. Cystine bridges form between Cys-31-Cys-165, Cys-52-Cys-68, Cys-100-Cys-258, Cys-144-Cys-212, Cys-176-Cys-191, and Cys-202-Cys-227. N-linked (GlcNAc...) asparagine glycosylation is present at Asn-83.

Belongs to the peptidase S1 family. Snake venom subfamily. Expressed by the venom gland.

Its subcellular location is the secreted. Its function is as follows. Snake venom serine protease homolog that may act in the hemostasis system of the prey. The protein is Snake venom serine protease homolog of Bothrops jararacussu (Jararacussu).